Reading from the N-terminus, the 240-residue chain is MLSLGLEDKVIVVTGGNRGIGAAIVKLLQEMGAKVAFTDLATDGGNTEALGVVANVTDLESMTAAAAEITDKLGPVYGVVANAGITKDNFFPKLTPADWDAVLNVNLKGVAYSIKPFIEGMYERKAGSIVAISSISGERGNVGQTNYSATKAGVIGMMKSLAREGARYGVRANAVAPGFIDTEMTLAIREDIREKITKEIPFRRFGKPEEIAWAVAFLLSPVASSYVTGEVLRVNGAHHT.

NADP(+)-binding positions include 18 to 20 (RGI) and 82 to 86 (NAGIT). Substrate is bound by residues Ser-134 and 141-144 (NVGQ). Tyr-147 acts as the Proton acceptor in catalysis. Residue 177–180 (PGFI) participates in NADP(+) binding. Residue 178 to 179 (GF) coordinates substrate.

It belongs to the short-chain dehydrogenases/reductases (SDR) family.

The catalysed reaction is a (3R)-3-hydroxyacyl-CoA + NADP(+) = a 3-oxoacyl-CoA + NADPH + H(+). The protein operates within biopolymer metabolism; poly-(R)-3-hydroxybutanoate biosynthesis. Functionally, catalyzes the reduction of acetoacetyl-CoA to (R)-3-hydroxybutyryl-CoA. When expressed in E.coli with Synechocystis PhaA, PhaC and PhaE confers the ability to synthesize up to 12% (w/w) poly(3-hydroxybutyrate) (PHB) depending on the carbon source. The protein is Acetoacetyl-CoA reductase of Synechocystis sp. (strain ATCC 27184 / PCC 6803 / Kazusa).